A 709-amino-acid polypeptide reads, in one-letter code: ATP-binding cassette sub-family F member 3 (709 aa).

N-acetylalanine is present on Ala2. Position 83 is a phosphoserine (Ser83). The segment covering 129–143 (RLKAKQEKRSEKDTL) has biased composition (basic and acidic residues). Residues 129–171 (RLKAKQEKRSEKDTLKTSNPLVLEEASASQAGSRKESRLESSG) form a disordered region. 3 positions are modified to phosphoserine: Ser155, Ser157, and Ser161. Residues 161–171 (SRKESRLESSG) show a composition bias toward basic and acidic residues. 2 consecutive ABC transporter domains span residues 178-424 (VRIE…LNQQ) and 492-707 (LQLD…RREG). 210 to 217 (GRNGLGKT) is a binding site for ATP. At Ser283 the chain carries Phosphoserine. 525–532 (GENGAGKS) provides a ligand contact to ATP.

It belongs to the ABC transporter superfamily. ABCF family. EF3 subfamily.

Displays an antiviral effect against flaviviruses in the presence of OAS1B. This is ATP-binding cassette sub-family F member 3 (ABCF3) from Pongo abelii (Sumatran orangutan).